We begin with the raw amino-acid sequence, 334 residues long: Probable type II restriction enzyme HindVP (334 aa).

It catalyses the reaction Endonucleolytic cleavage of DNA to give specific double-stranded fragments with terminal 5'-phosphates.. A P subtype restriction enzyme that recognizes the double-stranded sequence 5'-GRCGYC-3'; the cleavage site is unknown. This is Probable type II restriction enzyme HindVP (hindVRP) from Haemophilus influenzae (strain ATCC 51907 / DSM 11121 / KW20 / Rd).